A 775-amino-acid chain; its full sequence is 5-methyltetrahydropteroyltriglutamate--homocysteine methyltransferase (775 aa).

5-methyltetrahydropteroyltri-L-glutamate is bound by residues 16 to 19 and Lys115; that span reads REMK. L-homocysteine-binding positions include 435–437 and Glu488; that span reads IGS. Residues 435-437 and Glu488 each bind L-methionine; that span reads IGS. Residues 519–520 and Trp565 each bind 5-methyltetrahydropteroyltri-L-glutamate; that span reads RC. Asp603 is a binding site for L-homocysteine. Asp603 contacts L-methionine. 5-methyltetrahydropteroyltri-L-glutamate is bound at residue Glu609. Residues His645, Cys647, and Glu669 each contribute to the Zn(2+) site. The Proton donor role is filled by His698. Cys730 contributes to the Zn(2+) binding site.

Belongs to the vitamin-B12 independent methionine synthase family. It depends on Zn(2+) as a cofactor.

The catalysed reaction is 5-methyltetrahydropteroyltri-L-glutamate + L-homocysteine = tetrahydropteroyltri-L-glutamate + L-methionine. Its pathway is amino-acid biosynthesis; L-methionine biosynthesis via de novo pathway; L-methionine from L-homocysteine (MetE route): step 1/1. In terms of biological role, catalyzes the transfer of a methyl group from 5-methyltetrahydrofolate to homocysteine resulting in methionine formation. The polypeptide is 5-methyltetrahydropteroyltriglutamate--homocysteine methyltransferase (Coxiella burnetii (strain Dugway 5J108-111)).